The following is a 535-amino-acid chain: CTP synthase (535 aa).

The interval 1–267 (MTKYIFVTGG…DQIVCDHLKL (267 aa)) is amidoligase domain. Position 13 (Ser-13) interacts with CTP. Ser-13 is a UTP binding site. Residue 14 to 19 (SLGKGI) coordinates ATP. Residue Tyr-54 participates in L-glutamine binding. Asp-71 is a binding site for ATP. Mg(2+) contacts are provided by Asp-71 and Glu-141. CTP is bound by residues 148-150 (DIE), 188-193 (KTKPTQ), and Lys-224. UTP is bound by residues 188–193 (KTKPTQ) and Lys-224. ATP is bound at residue 240-242 (RDA). Residues 292 to 534 (KIALVGKYVE…VRASITNKES (243 aa)) form the Glutamine amidotransferase type-1 domain. Gly-354 is an L-glutamine binding site. Cys-381 (nucleophile; for glutamine hydrolysis) is an active-site residue. L-glutamine is bound by residues 382-385 (LGMQ), Glu-405, and Arg-462. Catalysis depends on residues His-507 and Glu-509.

Belongs to the CTP synthase family. Homotetramer.

It catalyses the reaction UTP + L-glutamine + ATP + H2O = CTP + L-glutamate + ADP + phosphate + 2 H(+). The catalysed reaction is L-glutamine + H2O = L-glutamate + NH4(+). It carries out the reaction UTP + NH4(+) + ATP = CTP + ADP + phosphate + 2 H(+). It participates in pyrimidine metabolism; CTP biosynthesis via de novo pathway; CTP from UDP: step 2/2. Its activity is regulated as follows. Allosterically activated by GTP, when glutamine is the substrate; GTP has no effect on the reaction when ammonia is the substrate. The allosteric effector GTP functions by stabilizing the protein conformation that binds the tetrahedral intermediate(s) formed during glutamine hydrolysis. Inhibited by the product CTP, via allosteric rather than competitive inhibition. Catalyzes the ATP-dependent amination of UTP to CTP with either L-glutamine or ammonia as the source of nitrogen. Regulates intracellular CTP levels through interactions with the four ribonucleotide triphosphates. In Bacillus cereus (strain AH820), this protein is CTP synthase.